Reading from the N-terminus, the 302-residue chain is Mas-related G-protein coupled receptor member A3 (302 aa).

At 1 to 17 (MNETIPGSIDIETLIPD) the chain is on the extracellular side. N2 carries an N-linked (GlcNAc...) asparagine glycan. A helical membrane pass occupies residues 18 to 38 (LMIIIFGLVGLTGNAIVFWLL). Residues 39 to 46 (GFRMHRTA) are Cytoplasmic-facing. A helical transmembrane segment spans residues 47-67 (FLVYILNLALADFLFLLCHII). N-linked (GlcNAc...) asparagine glycosylation occurs at N68. At 68-81 (NSTVDLLKFTLPKG) the chain is on the extracellular side. The chain crosses the membrane as a helical span at residues 82–102 (IFAFCFHTIKRVLYITGLSML). Over 103–129 (SAISTERCLSVLCPIWYHCRRPEHTST) the chain is Cytoplasmic. The chain crosses the membrane as a helical span at residues 130–150 (VMCAVIWVLSLLICILDGYFC). Topologically, residues 151-167 (GYLDNHYFNYSVCQAWD) are extracellular. Residue N159 is glycosylated (N-linked (GlcNAc...) asparagine). A helical transmembrane segment spans residues 168–188 (IFIGAYLMFLFVVLCLSTLAL). Residues 189–211 (LARLFCGARNMKFTRLFVTIMLT) are Cytoplasmic-facing. The chain crosses the membrane as a helical span at residues 212 to 232 (VLVFLLCGLPWGITWFLLFWI). The Extracellular portion of the chain corresponds to 233 to 242 (APGVFVLDYS). The helical transmembrane segment at 243-263 (PLLVLTAINSCANPIIYFFVG) threads the bilayer. At 264–302 (SFRQRLNKQTLKMVLQKALQDTPETPENMVEMSRNKAEP) the chain is on the cytoplasmic side.

This sequence belongs to the G-protein coupled receptor 1 family. Mas subfamily. As to expression, expressed exclusively in dorsal root ganglia and nodose ganglia. Expressed in a subset of sensory neurons that includes nociceptors. Expressed in the subclass of non-peptidergic sensory neurons that are IB4(+) and VR1(-).

Its subcellular location is the cell membrane. Orphan receptor. May be a receptor for RFamide-family neuropeptides such as NPFF and NPAF, which are analgesic in vivo. May regulate nociceptor function and/or development, including the sensation or modulation of pain. Activated by the antimalarial drug chloroquine. Mediates chloroquine-induced itch, in a histamine-independent manner. This Mus musculus (Mouse) protein is Mas-related G-protein coupled receptor member A3 (Mrgpra3).